The sequence spans 351 residues: UDP-3-O-acylglucosamine N-acyltransferase (351 aa).

The active-site Proton acceptor is the histidine 257.

This sequence belongs to the transferase hexapeptide repeat family. LpxD subfamily. In terms of assembly, homotrimer.

It carries out the reaction a UDP-3-O-[(3R)-3-hydroxyacyl]-alpha-D-glucosamine + a (3R)-hydroxyacyl-[ACP] = a UDP-2-N,3-O-bis[(3R)-3-hydroxyacyl]-alpha-D-glucosamine + holo-[ACP] + H(+). It participates in bacterial outer membrane biogenesis; LPS lipid A biosynthesis. Functionally, catalyzes the N-acylation of UDP-3-O-acylglucosamine using 3-hydroxyacyl-ACP as the acyl donor. Is involved in the biosynthesis of lipid A, a phosphorylated glycolipid that anchors the lipopolysaccharide to the outer membrane of the cell. The sequence is that of UDP-3-O-acylglucosamine N-acyltransferase from Methylorubrum extorquens (strain CM4 / NCIMB 13688) (Methylobacterium extorquens).